We begin with the raw amino-acid sequence, 562 residues long: Catalase T (562 aa).

Active-site residues include H64 and N137. Y351 provides a ligand contact to heme.

This sequence belongs to the catalase family. As to quaternary structure, homotetramer. Heme serves as cofactor.

The protein resides in the cytoplasm. The catalysed reaction is 2 H2O2 = O2 + 2 H2O. In terms of biological role, occurs in almost all aerobically respiring organisms and serves to protect cells from the toxic effects of hydrogen peroxide. The chain is Catalase T (CTT1) from Saccharomyces cerevisiae (strain ATCC 204508 / S288c) (Baker's yeast).